A 2158-amino-acid polypeptide reads, in one-letter code: Non-reducing polyketide synthase Preu8 (2158 aa).

The N-terminal acylcarrier protein transacylase domain (SAT) stretch occupies residues 4–241 (LVLGDQVADH…TPIPVFAPYH (238 aa)). The Ketosynthase family 3 (KS3) domain occupies 369-801 (NDKIAIVGMS…GGNTAIILED (433 aa)). Active-site for beta-ketoacyl synthase activity residues include Cys541, His676, and His719. Residues 900 to 1215 (FTFTGQGSQY…ANSVSTLFLA (316 aa)) form a malonyl-CoA:ACP transacylase (MAT) domain region. Ser989 acts as the For acyl/malonyl transferase activity in catalysis. A product template (PT) domain region spans residues 1285–1603 (SCQRIVREEL…RRVLNIMMPP (319 aa)). The segment at 1287-1423 (QRIVREELHA…GTVKYEDVSQ (137 aa)) is N-terminal hotdog fold. Residues 1287–1598 (QRIVREELHA…FQNIARRVLN (312 aa)) form the PKS/mFAS DH domain. The active-site Proton acceptor; for dehydratase activity is the His1319. Residues 1451–1598 (AHKVLRGMAY…FQNIARRVLN (148 aa)) form a C-terminal hotdog fold region. The Proton donor; for dehydratase activity role is filled by Asp1511. Residues 1619 to 1639 (KKAASPTLAPAKAAKPAAKTS) are compositionally biased toward low complexity. A disordered region spans residues 1619 to 1654 (KKAASPTLAPAKAAKPAAKTSKPSKARAKPAADSTT). The region spanning 1651-1725 (DSTTSRVMKI…QMKKFFSQYD (75 aa)) is the Carrier 1 domain. The residue at position 1685 (Ser1685) is an O-(pantetheine 4'-phosphoryl)serine. Residues 1723-1779 (QYDGAPIPDDGDDSDGTDEPSNFSTPSYGADNASTPPSSAPSVNGKSSPENHEVLES) are disordered. Acidic residues predominate over residues 1731-1740 (DDGDDSDGTD). Positions 1743-1770 (SNFSTPSYGADNASTPPSSAPSVNGKSS) are enriched in polar residues. Residues 1779 to 1853 (STEVSLARKI…DIENELGMRP (75 aa)) form the Carrier 2 domain. Position 1813 is an O-(pantetheine 4'-phosphoryl)serine (Ser1813). The segment at 1847-1879 (NELGMRPKPKPKAEAAPPKSSAKASPSANKQPQ) is disordered. Positions 1860–1876 (EAAPPKSSAKASPSANK) are enriched in low complexity. Residues 1894 to 2144 (SQYPPANSVL…NHFTMMKGDH (251 aa)) form a thioesterase (TE) domain region.

Pantetheine 4'-phosphate serves as cofactor.

Functionally, non-reducing polyketide synthase; part of a gene cluster that mediates the biosynthesis of a yet unidentified natural product. The polypeptide is Non-reducing polyketide synthase Preu8 (Preussia isomera (Coprophilous fungus)).